A 556-amino-acid chain; its full sequence is Formate--tetrahydrofolate ligase (556 aa).

65 to 72 (TPAGEGKS) provides a ligand contact to ATP.

The protein belongs to the formate--tetrahydrofolate ligase family.

It carries out the reaction (6S)-5,6,7,8-tetrahydrofolate + formate + ATP = (6R)-10-formyltetrahydrofolate + ADP + phosphate. Its pathway is one-carbon metabolism; tetrahydrofolate interconversion. The polypeptide is Formate--tetrahydrofolate ligase (Streptococcus agalactiae serotype Ia (strain ATCC 27591 / A909 / CDC SS700)).